We begin with the raw amino-acid sequence, 349 residues long: Probable sugar phosphate/phosphate translocator At5g25400 (349 aa).

Helical transmembrane passes span 15–35, 49–69, 89–109, 113–133, 141–161, 165–185, 205–225, 236–256, 263–283, and 286–306; these read IIISYTYVAIWIFLSFTVIVY, FPISLTMIHMSFCSTLAFLLI, VVPIGALYSLSLWLSNSAYIY, SFIQMLKALMPVAVYSIGVLF, ETMMNMLSISFGVAIAAYGEA, VWGVILQLGAVAFEATRLVMI, VAPCCLAFLFIPWIVVEFPIL, LIFGTNSFCAFALNLAVFLLV, TMNVAGVVKDWLLIAFSWSVI, and TVTPINLFGYGIAFLGVAYYN. Residues 38–156 enclose the EamA domain; sequence YILDKKMYDW…LSISFGVAIA (119 aa). The interval 321–349 is disordered; it reads TAQQVDEETGRLLEEREGNEGGRKNEPED. A compositionally biased stretch (basic and acidic residues) spans 328–349; sequence ETGRLLEEREGNEGGRKNEPED.

Belongs to the TPT transporter family. TPT (TC 2.A.7.9) subfamily.

The protein localises to the membrane. This chain is Probable sugar phosphate/phosphate translocator At5g25400, found in Arabidopsis thaliana (Mouse-ear cress).